A 1484-amino-acid chain; its full sequence is Cystic fibrosis transmembrane conductance regulator (1484 aa).

At 1 to 77 (MQRSPLERAN…KLINALRRCF (77 aa)) the chain is on the cytoplasmic side. A helical transmembrane segment spans residues 78 to 98 (FWRFMFYGLLLYLGEVTKAVQ). The 285-residue stretch at 81 to 365 (FMFYGLLLYL…WAVQMWYDSI (285 aa)) folds into the ABC transmembrane type-1 1 domain. The Extracellular portion of the chain corresponds to 99–122 (PLLLGRIIASYDPDNAHERSIAYY). A helical transmembrane segment spans residues 123 to 146 (LGIGLCLLFIVRTLLLHPAVFGLH). At 147 to 195 (HIGMQMRIALFSLIYKKTLKLSSRVLDKISTGQLVSLLSNNLNKFDEGL) the chain is on the cytoplasmic side. A helical membrane pass occupies residues 196 to 216 (ALAHFVWIAPLQVMLLMGLLW). At 217–222 (DLLQAS) the chain is on the extracellular side. A helical transmembrane segment spans residues 223–243 (AFCGLAVLVVLVLFQAWLGHR). Topologically, residues 244–298 (MMKYRDRRAGKINERLVITAEIIENIQSVKAYCWEEAMENMIESLRETELKLTRK) are cytoplasmic. The chain crosses the membrane as a helical span at residues 299 to 319 (AAYMRYFNSSAFFFSGFFVVF). Residues 320-339 (LSVLPSMLTKGIVLRKIFTT) lie on the Extracellular side of the membrane. A helical membrane pass occupies residues 340–358 (ISFCIVLRMAVTRQFPWAV). At 359–859 (QMWYDSIGAI…YLRYMTIHKK (501 aa)) the chain is on the cytoplasmic side. ATP contacts are provided by residues Trp-401, Ser-434, 458-465 (GSTGAGKT), and Gln-493. Residues 423–646 (SDDKNLIFSN…RPDFSSKLMG (224 aa)) form the ABC transporter 1 domain. Residue Cys-524 is the site of S-palmitoyl cysteine attachment. Residues Ser-549 and Ser-660 each carry the phosphoserine modification. The disordered R region stretch occupies residues 654–832 (SAERRNSILT…EEINEEDLKE (179 aa)). Residue Ser-670 is modified to Phosphoserine; by PKA. Ser-686 carries the post-translational modification Phosphoserine. Residue Lys-688 forms a Glycyl lysine isopeptide (Lys-Gly) (interchain with G-Cter in ubiquitin) linkage. Ser-700, Ser-712, Ser-737, Ser-768, Ser-791, Ser-796, and Ser-814 each carry phosphoserine. The chain crosses the membrane as a helical span at residues 860 to 880 (LIFVLMMCLVIFLIEVAASLV). Positions 860 to 1159 (LIFVLMMCLV…AVNASIDVDS (300 aa)) constitute an ABC transmembrane type-1 2 domain. Topologically, residues 881 to 922 (GLCLFKDGASRMNSTSNLNHTSTLDWFAVIVTNTSTYYMFYI) are extracellular. 3 N-linked (GlcNAc...) asparagine glycosylation sites follow: Asn-893, Asn-899, and Asn-913. A discontinuously helical membrane pass occupies residues 923 to 943 (YVGVADTLLALGFLRGLPLVH). Topologically, residues 944–994 (SLISVSKILHQKMLHSVLQAPMSTFNTLKTGSILNRFSKDMAILDDLLPLT) are cytoplasmic. Residues 995–1015 (IFDFIQLLLIVIGAVTVVSAL) traverse the membrane as a helical segment. The Extracellular segment spans residues 1016–1017 (QP). The helical transmembrane segment at 1018–1038 (YIFLASVPVVIAFVLLRAYFL) threads the bilayer. Residues 1039–1099 (RTSQQLKQLE…TANWFLYLST (61 aa)) are Cytoplasmic-facing. Residues 1100-1120 (LRWFQMRIEMVFVIFFILVTF) form a helical membrane-spanning segment. The Extracellular segment spans residues 1121–1134 (ISILTTGDGEGKVG). Residues 1135–1155 (IVLTLAMNIMGTLQWAVNASI) traverse the membrane as a helical segment. At 1156–1484 (DVDSLMRSVS…TEEEVQDTRL (329 aa)) the chain is on the cytoplasmic side. The region spanning 1212–1445 (MTVQDLTAKY…KSVFKQAISH (234 aa)) is the ABC transporter 2 domain. ATP contacts are provided by residues Tyr-1221 and 1246 to 1253 (GRTGSGKS). Positions 1388–1484 (KTLKQAFTNC…TEEEVQDTRL (97 aa)) are interaction with GORASP2. Residue Cys-1397 is the site of S-palmitoyl cysteine attachment. Ser-1446 and Ser-1460 each carry phosphoserine. Residues 1463–1484 (LSRPKITALQEETEEEVQDTRL) are disordered. Positions 1473-1484 (EETEEEVQDTRL) are enriched in acidic residues. Positions 1482-1484 (TRL) match the PDZ-binding motif.

Belongs to the ABC transporter superfamily. ABCC family. CFTR transporter (TC 3.A.1.202) subfamily. Monomer; does not require oligomerization for channel activity. May form oligomers in the membrane. Interacts with SLC26A3, SLC26A6 and NHERF1. Interacts with SHANK2. Interacts with MYO6. Interacts (via C-terminus) with GOPC (via PDZ domain); this promotes CFTR internalization and thereby decreases channel activity. Interacts with SLC4A7 through NHERF1. Found in a complex with MYO5B and RAB11A. Interacts with ANO1. Interacts with SLC26A8. Interacts with AHCYL1; the interaction increases CFTR activity. Interacts with CSE1L. The core-glycosylated form interacts with GORASP2 (via PDZ GRASP-type 1 domain) in respone to ER stress. Interacts with MARCHF2; the interaction leads to CFTR ubiqtuitination and degradation. Interacts with ADGRG2. Post-translationally, N-glycosylated. Phosphorylated; cAMP treatment promotes phosphorylation and activates the channel. Dephosphorylation decreases the ATPase activity (in vitro). Phosphorylation at PKA sites activates the channel. Phosphorylation at PKC sites enhances the response to phosphorylation by PKA. Phosphorylated by AMPK; this inhibits channel activity. In terms of processing, ubiquitinated, leading to its degradation in the lysosome. Deubiquitination by USP10 in early endosomes enhances its endocytic recycling to the cell membrane. Ubiquitinated by RNF185 during ER stress. Ubiquitinated by MARCHF2.

The protein resides in the apical cell membrane. It localises to the early endosome membrane. It is found in the cell membrane. Its subcellular location is the recycling endosome membrane. The protein localises to the endoplasmic reticulum membrane. The protein resides in the nucleus. The catalysed reaction is ATP + H2O + closed Cl(-) channel = ADP + phosphate + open Cl(-) channel.. It carries out the reaction chloride(in) = chloride(out). It catalyses the reaction hydrogencarbonate(in) = hydrogencarbonate(out). The enzyme catalyses ATP + H2O = ADP + phosphate + H(+). Functionally, epithelial ion channel that plays an important role in the regulation of epithelial ion and water transport and fluid homeostasis. Mediates the transport of chloride ions across the cell membrane. Possesses an intrinsic ATPase activity and utilizes ATP to gate its channel; the passive flow of anions through the channel is gated by cycles of ATP binding and hydrolysis by the ATP-binding domains. The ion channel is also permeable to HCO(3)(-); selectivity depends on the extracellular chloride concentration. Exerts its function also by modulating the activity of other ion channels and transporters. Contributes to the regulation of the pH and the ion content of the epithelial fluid layer. Modulates the activity of the epithelial sodium channel (ENaC) complex, in part by regulating the cell surface expression of the ENaC complex. May regulate bicarbonate secretion and salvage in epithelial cells by regulating the transporter SLC4A7. Can inhibit the chloride channel activity of ANO1. Plays a role in the chloride and bicarbonate homeostasis during sperm epididymal maturation and capacitation. This is Cystic fibrosis transmembrane conductance regulator from Ornithorhynchus anatinus (Duckbill platypus).